A 465-amino-acid chain; its full sequence is Pancreatic triacylglycerol lipase (465 aa).

The signal sequence occupies residues 1–16; the sequence is MLMLWTFAVLLGAVAG. 2 disulfides stabilise this stretch: Cys20–Cys26 and Cys107–Cys118. Ser169 serves as the catalytic Nucleophile. Asp193 serves as the catalytic Charge relay system. Ca(2+) is bound by residues Glu204, Arg207, Asp209, and Asp212. A disulfide bond links Cys254 and Cys278. The active-site Charge relay system is His280. 3 cysteine pairs are disulfide-bonded: Cys302/Cys313, Cys316/Cys321, and Cys449/Cys465. In terms of domain architecture, PLAT spans 355–465; that stretch reads WRYQVTVTLS…EDVLLTLSPC (111 aa).

This sequence belongs to the AB hydrolase superfamily. Lipase family. Forms a 1:1 stoichiometric complex with (pro)colipase/CLPS. As to expression, pancreas.

It is found in the secreted. The enzyme catalyses a triacylglycerol + H2O = a diacylglycerol + a fatty acid + H(+). The catalysed reaction is 1,2,3-tri-(9Z-octadecenoyl)-glycerol + H2O = di-(9Z)-octadecenoylglycerol + (9Z)-octadecenoate + H(+). It catalyses the reaction 1,2,3-tributanoylglycerol + H2O = dibutanoylglycerol + butanoate + H(+). It carries out the reaction all-trans-retinyl hexadecanoate + H2O = all-trans-retinol + hexadecanoate + H(+). The enzyme catalyses 1,2-di-(9Z-octadecenoyl)-glycerol + H2O = (9Z-octadecenoyl)-glycerol + (9Z)-octadecenoate + H(+). Its activity is regulated as follows. Inhibited by bile salts, is reactivated by (pro)colipase/CLPS. Plays an important role in fat metabolism. It preferentially splits the esters of long-chain fatty acids at positions 1 and 3, producing mainly 2-monoacylglycerol and free fatty acids, and shows considerably higher activity against insoluble emulsified substrates than against soluble ones. This Mus musculus (Mouse) protein is Pancreatic triacylglycerol lipase.